We begin with the raw amino-acid sequence, 107 residues long: Anti-adapter protein IraM (107 aa).

It belongs to the IraM/RssC family.

The protein localises to the cytoplasm. Functionally, inhibits RpoS proteolysis by regulating RssB activity, thereby increasing the stability of the sigma stress factor RpoS during magnesium starvation. The chain is Anti-adapter protein IraM from Escherichia coli O7:K1 (strain IAI39 / ExPEC).